The sequence spans 63 residues: Small ribosomal subunit protein eS17 (63 aa).

This sequence belongs to the eukaryotic ribosomal protein eS17 family.

The sequence is that of Small ribosomal subunit protein eS17 from Methanosphaerula palustris (strain ATCC BAA-1556 / DSM 19958 / E1-9c).